Here is a 278-residue protein sequence, read N- to C-terminus: tRNA(Phe) (4-demethylwyosine(37)-C(7)) aminocarboxypropyltransferase (278 aa).

S-adenosyl-L-methionine-binding positions include S109, R116, E155, and 183 to 184; that span reads DN.

Belongs to the class I-like SAM-binding methyltransferase superfamily. TRM5/TYW2 family.

The protein resides in the cytoplasm. The catalysed reaction is 4-demethylwyosine(37) in tRNA(Phe) + S-adenosyl-L-methionine = 4-demethyl-7-[(3S)-3-amino-3-carboxypropyl]wyosine(37) in tRNA(Phe) + S-methyl-5'-thioadenosine + H(+). S-adenosyl-L-methionine-dependent transferase that acts as a component of the wyosine derivatives biosynthesis pathway. Catalyzes the transfer of the alpha-amino-alpha-carboxypropyl (acp) group from S-adenosyl-L-methionine to 4-demethylwyosine (imG-14), forming 7-aminocarboxypropyl-demethylwyosine (wybutosine-86) at position 37 of tRNA(Phe). In Pyrococcus horikoshii (strain ATCC 700860 / DSM 12428 / JCM 9974 / NBRC 100139 / OT-3), this protein is tRNA(Phe) (4-demethylwyosine(37)-C(7)) aminocarboxypropyltransferase.